The primary structure comprises 431 residues: Enolase (431 aa).

Residue Gln164 participates in (2R)-2-phosphoglycerate binding. Glu206 acts as the Proton donor in catalysis. Residues Asp243, Glu288, and Asp315 each contribute to the Mg(2+) site. Lys340, Arg369, Ser370, and Lys391 together coordinate (2R)-2-phosphoglycerate. Lys340 (proton acceptor) is an active-site residue.

The protein belongs to the enolase family. Requires Mg(2+) as cofactor.

It localises to the cytoplasm. It is found in the secreted. The protein localises to the cell surface. The catalysed reaction is (2R)-2-phosphoglycerate = phosphoenolpyruvate + H2O. It participates in carbohydrate degradation; glycolysis; pyruvate from D-glyceraldehyde 3-phosphate: step 4/5. In terms of biological role, catalyzes the reversible conversion of 2-phosphoglycerate (2-PG) into phosphoenolpyruvate (PEP). It is essential for the degradation of carbohydrates via glycolysis. In Fervidobacterium nodosum (strain ATCC 35602 / DSM 5306 / Rt17-B1), this protein is Enolase.